Consider the following 255-residue polypeptide: Pyrroloquinoline-quinone synthase (255 aa).

This sequence belongs to the PqqC family.

The catalysed reaction is 6-(2-amino-2-carboxyethyl)-7,8-dioxo-1,2,3,4,7,8-hexahydroquinoline-2,4-dicarboxylate + 3 O2 = pyrroloquinoline quinone + 2 H2O2 + 2 H2O + H(+). The protein operates within cofactor biosynthesis; pyrroloquinoline quinone biosynthesis. Its function is as follows. Ring cyclization and eight-electron oxidation of 3a-(2-amino-2-carboxyethyl)-4,5-dioxo-4,5,6,7,8,9-hexahydroquinoline-7,9-dicarboxylic-acid to PQQ. This chain is Pyrroloquinoline-quinone synthase, found in Cereibacter sphaeroides (strain ATCC 17029 / ATH 2.4.9) (Rhodobacter sphaeroides).